The sequence spans 367 residues: Cystinosin (367 aa).

The signal sequence occupies residues 1 to 22 (MRRNWLLILTLFLLMFIEKYES). The Lumenal segment spans residues 23-125 (TVSLTAPPTV…LVIHSRIVSI (103 aa)). Residues Asn36, Asn51, Asn66, Asn84, Asn104, and Asn107 are each glycosylated (N-linked (GlcNAc...) asparagine). The PQ-loop 1 domain maps to 123-189 (VSIINQVIGW…LLWVPYIQEE (67 aa)). Residues 126-150 (INQVIGWIYFMAWSVSFYPQVIQNW) form a helical membrane-spanning segment. Over 151–159 (RRKSVIGLS) the chain is Cytoplasmic. The chain crosses the membrane as a helical span at residues 160–179 (FDFLALNLTGFVAYSVFNIG). Asn166 serves as a coordination point for L-cystine. The Lumenal portion of the chain corresponds to 180–202 (LLWVPYIQEEFLLKYPNGVNPVD). Residues 203–225 (SNDAFFSLHAVALTLIVILQCCL) traverse the membrane as a helical segment. A H(+)-binding site is contributed by Asp205. The Cytoplasmic portion of the chain corresponds to 226-234 (YERGNQRVS). The helical transmembrane segment at 235–257 (WPSIGFLVLAWLFVLVTMIVAAV) threads the bilayer. At 258–263 (GITTWL) the chain is on the lumenal side. Residues 263 to 328 (LQFLFCFSYI…QSYNNDQWTL (66 aa)) enclose the PQ-loop 2 domain. Residues 264–289 (QFLFCFSYIKLIITLIKYFPQAYMNF) traverse the membrane as a helical segment. L-cystine contacts are provided by Lys273, Lys280, and Tyr281. Topologically, residues 290–298 (YYKSTKGWS) are cytoplasmic. The helical transmembrane segment at 299–308 (IGGVLLDFTG) threads the bilayer. Asp305 contacts L-cystine. Position 305 (Asp305) interacts with H(+). Residues 309–331 (GSFSLLQMFLQSYNNDQWTLIFG) lie on the Lumenal side of the membrane. A helical transmembrane segment spans residues 332 to 354 (DPTKFGLGVFTIFFDVVFFIQHF). A H(+)-binding site is contributed by Asp346. The Cytoplasmic portion of the chain corresponds to 355–367 (YLYRKKPGYDQLN). Positions 362-366 (GYDQL) match the Lysosomal targeting motif motif.

This sequence belongs to the cystinosin family. As to quaternary structure, interacts with components of the V-ATPase complex. Interacts with components of the Ragulator complex. Interacts with RRAGA/RagA and RRAGC/RagC. Interacts with AP-3 complex subunit mu (AP3M1 or AP3M2).

Its subcellular location is the lysosome membrane. The protein localises to the melanosome membrane. It carries out the reaction L-cystine(out) + H(+)(out) = L-cystine(in) + H(+)(in). Its activity is regulated as follows. Switches between a lumen- and a cytosol-open conformation: pH induces conformational changes and shifts the equilibrium to facilitate the transition between the lumen- and cytosol-open conformation, thereby promoting cystine transport. Protonation of specific aspartate residues (Asp-205, Asp-305 and Asp-346) favors the cytosol-open conformation. Its function is as follows. Cystine/H(+) symporter that mediates export of cystine, the oxidized dimer of cysteine, from lysosomes. Plays an important role in melanin synthesis by catalyzing cystine export from melanosomes, possibly by inhibiting pheomelanin synthesis. In addition to cystine export, also acts as a positive regulator of mTORC1 signaling in kidney proximal tubular cells, via interactions with components of the v-ATPase and Ragulator complexes. Also involved in small GTPase-regulated vesicle trafficking and lysosomal localization of LAMP2A, independently of cystine transporter activity. In Mus musculus (Mouse), this protein is Cystinosin.